A 116-amino-acid polypeptide reads, in one-letter code: NADPH-dependent 7-cyano-7-deazaguanine reductase (116 aa).

Residue cysteine 31 is the Thioimide intermediate of the active site. Residue aspartate 38 is the Proton donor of the active site. Residues 53–55 and 72–73 contribute to the substrate site; these read VEL and YE.

The protein belongs to the GTP cyclohydrolase I family. QueF type 1 subfamily.

Its subcellular location is the cytoplasm. It carries out the reaction 7-aminomethyl-7-carbaguanine + 2 NADP(+) = 7-cyano-7-deazaguanine + 2 NADPH + 3 H(+). The protein operates within tRNA modification; tRNA-queuosine biosynthesis. Catalyzes the NADPH-dependent reduction of 7-cyano-7-deazaguanine (preQ0) to 7-aminomethyl-7-deazaguanine (preQ1). The polypeptide is NADPH-dependent 7-cyano-7-deazaguanine reductase (Chlorobium chlorochromatii (strain CaD3)).